The sequence spans 315 residues: MPDIKLFAGNATPELAKRISERLYISLGDATVARFSDGEIQVQINENVRGADVFIIQSTCAPTNDNLMELVVMVDALRRASAGRITAVIPYFGYARQDRRVRSARVPITAKVVADLLSIVGIDRVLTCDLHAEQIQGFFDVPVDNVFGSPVLIHDILKKSDLKNPIVVSPDIGGVVRARAVAKLLNDTDMAIIDKRRPRANVAQVMHIIGDVADRDCILVDDMIDTGGTLCKAAEALKERGAKRVFAYATHAVFSGAAAKNLASDAIDEVVVTDTIPLSEEMKAIGKVRVLTLSSMLAEAIRRISNEESISAMFN.

ATP is bound by residues 37–39 (DGE) and 96–97 (RQ). Positions 131 and 171 each coordinate Mg(2+). Residue K195 is part of the active site. Residues R197, D221, and 225 to 229 (DTGGT) each bind D-ribose 5-phosphate.

Belongs to the ribose-phosphate pyrophosphokinase family. Class I subfamily. In terms of assembly, homohexamer. Mg(2+) is required as a cofactor.

Its subcellular location is the cytoplasm. It carries out the reaction D-ribose 5-phosphate + ATP = 5-phospho-alpha-D-ribose 1-diphosphate + AMP + H(+). Its pathway is metabolic intermediate biosynthesis; 5-phospho-alpha-D-ribose 1-diphosphate biosynthesis; 5-phospho-alpha-D-ribose 1-diphosphate from D-ribose 5-phosphate (route I): step 1/1. Functionally, involved in the biosynthesis of the central metabolite phospho-alpha-D-ribosyl-1-pyrophosphate (PRPP) via the transfer of pyrophosphoryl group from ATP to 1-hydroxyl of ribose-5-phosphate (Rib-5-P). This is Ribose-phosphate pyrophosphokinase from Haemophilus influenzae (strain ATCC 51907 / DSM 11121 / KW20 / Rd).